The sequence spans 365 residues: TD and POZ domain-containing protein 1-like (365 aa).

Residues 19 to 149 (KFCYKWTISN…EDQLTICCKV (131 aa)) form the MATH domain. Positions 188–255 (TDCCLLVAGH…IYTGKAPYLH (68 aa)) constitute a BTB domain.

Belongs to the Tdpoz family.

The protein is TD and POZ domain-containing protein 1-like of Mus musculus (Mouse).